The primary structure comprises 411 residues: Na(+)-translocating NADH-quinone reductase subunit F (411 aa).

A helical transmembrane segment spans residues 6-26 (AIGGVAMFTLIIMSFVAIILA). The 95-residue stretch at 35-129 (GDVTIHINDN…DMKIEIDPEF (95 aa)) folds into the 2Fe-2S ferredoxin-type domain. [2Fe-2S] cluster is bound by residues Cys72, Cys78, Cys81, and Cys113. In terms of domain architecture, FAD-binding FR-type spans 132 to 273 (VQKWECEVIS…SGPYGEFFAK (142 aa)).

Belongs to the NqrF family. Composed of six subunits; NqrA, NqrB, NqrC, NqrD, NqrE and NqrF. [2Fe-2S] cluster is required as a cofactor. It depends on FAD as a cofactor.

The protein localises to the cell inner membrane. It catalyses the reaction a ubiquinone + n Na(+)(in) + NADH + H(+) = a ubiquinol + n Na(+)(out) + NAD(+). In terms of biological role, NQR complex catalyzes the reduction of ubiquinone-1 to ubiquinol by two successive reactions, coupled with the transport of Na(+) ions from the cytoplasm to the periplasm. The first step is catalyzed by NqrF, which accepts electrons from NADH and reduces ubiquinone-1 to ubisemiquinone by a one-electron transfer pathway. The chain is Na(+)-translocating NADH-quinone reductase subunit F from Psychrobacter arcticus (strain DSM 17307 / VKM B-2377 / 273-4).